The following is an 805-amino-acid chain: Ubiquitin carboxyl-terminal hydrolase 10 (805 aa).

Residues 139-170 are disordered; the sequence is DGSGNADSDGTSGTGQRERKKKKKRPPGYYSY. A compositionally biased stretch (polar residues) spans 143-153; it reads NADSDGTSGTG. Residues 422–802 form the USP domain; that stretch reads RGLINKGNWC…TAYLLYYRRV (381 aa). Residue Cys431 is the Nucleophile of the active site. A disordered region spans residues 561 to 593; it reads HINNGPDPVSEKEEINKDEQEGSDEEWEQVGPR. Residues 569–580 are compositionally biased toward basic and acidic residues; the sequence is VSEKEEINKDEQ. The active-site Proton acceptor is His756.

It belongs to the peptidase C19 family. USP10 subfamily.

Its subcellular location is the cytoplasm. It is found in the nucleus. The enzyme catalyses Thiol-dependent hydrolysis of ester, thioester, amide, peptide and isopeptide bonds formed by the C-terminal Gly of ubiquitin (a 76-residue protein attached to proteins as an intracellular targeting signal).. Hydrolase that can remove conjugated ubiquitin from target proteins such as p53/tp53, rps2/us5, rps3/us3, rps10/eS10, becn1, snx3 and cftr. Acts as an essential regulator of p53/tp53 stability: in unstressed cells, specifically deubiquitinates p53/tp53 in the cytoplasm, leading to counteracts MDM2 action and stabilize p53/tp53. Following DNA damage, translocates to the nucleus and deubiquitinates p53/tp53, leading to regulate the p53/TP53-dependent DNA damage response. Component of a regulatory loop that controls autophagy and p53/tp53 levels. Plays a key role in 40S ribosome subunit recycling when a ribosome has stalled during translation: acts both by inhibiting formation of stress granules, which store stalled translation pre-initiation complexes, and mediating deubiquitination of 40S ribosome subunits. Deubiquitinates cftr in early endosomes, enhancing its endocytic recycling. This Xenopus tropicalis (Western clawed frog) protein is Ubiquitin carboxyl-terminal hydrolase 10 (usp10).